A 234-amino-acid polypeptide reads, in one-letter code: uncharacterized protein (234 aa).

The ABC transporter domain maps to 5–234 (MELVDVWKIY…ERRGVVYGDT (230 aa)). 41–48 (GPSGSGKS) contacts ATP.

Belongs to the ABC transporter superfamily.

This is an uncharacterized protein from Thermotoga maritima (strain ATCC 43589 / DSM 3109 / JCM 10099 / NBRC 100826 / MSB8).